A 336-amino-acid chain; its full sequence is O-methyltransferase 2 (336 aa).

Positions 170, 198, 221, 222, and 237 each coordinate S-adenosyl-L-methionine. Histidine 241 acts as the Proton acceptor in catalysis.

This sequence belongs to the class I-like SAM-binding methyltransferase superfamily. Cation-independent O-methyltransferase family. COMT subfamily.

The catalysed reaction is (3,5-dichloro-2,4,6-trihydroxyphenyl)hexan-1-one + S-adenosyl-L-methionine = 1-(3,5-dichloro-2,6-dihydroxy-4-methoxyphenyl)hexan-1-one + S-adenosyl-L-homocysteine + H(+). This chain is O-methyltransferase 2 (omt2), found in Dictyostelium discoideum (Social amoeba).